A 417-amino-acid polypeptide reads, in one-letter code: MFSRDLTIAKYDADLFAAMEQEALRQEEHIELIASENYTSPAVMEAQGSALTNKYAEGYPGKRYYGGCEYVDVIEQLAIDRAKELFGADYANVQPHAGSQANSAVYLALLQGGDTILGMSLAHGGHLTHGASVSSSGKLYNAVQYGIDANGMIDYDEVERLAVEHKPKMIVAGFSAYSQILDFPRFRAIADKVGAYLFVDMAHVAGLVAAGVYPNPVPFADVVTTTTHKTLRGPRGGLILARANAEIEKKLNSAVFPGSQGGPLEHVIAAKAVCFKEALQPEFKTYQQQVVKNAKAMAGVFIERGFDVVSGGTENHLFLLSLIKQDISGKDADAALGRAFITVNKNSVPNDPRSPFVTSGLRFGTPAVTTRGFKEAECKELAGWICDILADLNNEAVIDAVREKVKAICAKLPVYGA.

(6S)-5,6,7,8-tetrahydrofolate is bound by residues leucine 121 and 125 to 127 (GHL). N6-(pyridoxal phosphate)lysine is present on lysine 229. 354–356 (SPF) is a binding site for (6S)-5,6,7,8-tetrahydrofolate.

The protein belongs to the SHMT family. Homodimer. Pyridoxal 5'-phosphate serves as cofactor.

The protein resides in the cytoplasm. It catalyses the reaction (6R)-5,10-methylene-5,6,7,8-tetrahydrofolate + glycine + H2O = (6S)-5,6,7,8-tetrahydrofolate + L-serine. It functions in the pathway one-carbon metabolism; tetrahydrofolate interconversion. Its pathway is amino-acid biosynthesis; glycine biosynthesis; glycine from L-serine: step 1/1. Its function is as follows. Catalyzes the reversible interconversion of serine and glycine with tetrahydrofolate (THF) serving as the one-carbon carrier. This reaction serves as the major source of one-carbon groups required for the biosynthesis of purines, thymidylate, methionine, and other important biomolecules. Also exhibits THF-independent aldolase activity toward beta-hydroxyamino acids, producing glycine and aldehydes, via a retro-aldol mechanism. The chain is Serine hydroxymethyltransferase 1 from Pseudomonas savastanoi pv. phaseolicola (strain 1448A / Race 6) (Pseudomonas syringae pv. phaseolicola (strain 1448A / Race 6)).